We begin with the raw amino-acid sequence, 296 residues long: Maltose/maltodextrin transport system permease protein MalG (296 aa).

The Cytoplasmic portion of the chain corresponds to 1–12 (MAMVQPKSQKWR). A helical transmembrane segment spans residues 13–35 (LLATHLLMFTFIAMILFPLLMVI). The Periplasmic portion of the chain corresponds to 36–88 (TISLRPGNFATGSLIPENISWEHWKLALGYSVVSPDGRVTPPPFPVMLWLWNS). The region spanning 85-281 (LWNSVKVAFI…LPITIVFLVA (197 aa)) is the ABC transmembrane type-1 domain. A helical transmembrane segment spans residues 89 to 111 (VKVAFITAVGIVTLSTTCAYAFA). Topologically, residues 112–123 (RMHFRGKSTLLK) are cytoplasmic. Residues 124–143 (GMLIFQMFPAVLSLVALYAL) traverse the membrane as a helical segment. Over 144-152 (FDRLGEYVP) the chain is Periplasmic. Residues 153–175 (FIGLNTHGGVIFAYLGGIALHVW) traverse the membrane as a helical segment. The Cytoplasmic segment spans residues 176–205 (TIKGYFETIDGSLEEAAALDGATPWQAFRM). The chain crosses the membrane as a helical span at residues 206 to 228 (VLLPLSVPILAVVFILSFIGVIT). At 229-257 (EVPVASLLLRDVNNYTLAVGMQQYLNPQN) the chain is on the periplasmic side. A helical membrane pass occupies residues 258–280 (YLWGDFAAAAVLSALPITIVFLV). Topologically, residues 281–296 (AQRWLVSGLTAGGVKG) are cytoplasmic.

Belongs to the binding-protein-dependent transport system permease family. MalFG subfamily. In terms of assembly, the complex is composed of two ATP-binding proteins (MalK), two transmembrane proteins (MalG and MalF) and a solute-binding protein (MalE).

The protein localises to the cell inner membrane. Functionally, part of the ABC transporter complex MalEFGK involved in maltose/maltodextrin import. Probably responsible for the translocation of the substrate across the membrane. The polypeptide is Maltose/maltodextrin transport system permease protein MalG (malG) (Photorhabdus laumondii subsp. laumondii (strain DSM 15139 / CIP 105565 / TT01) (Photorhabdus luminescens subsp. laumondii)).